A 179-amino-acid polypeptide reads, in one-letter code: ATP synthase subunit b, chloroplastic (179 aa).

A helical transmembrane segment spans residues 28–46 (IINIAALVGILIYAGRDFL).

It belongs to the ATPase B chain family. As to quaternary structure, F-type ATPases have 2 components, F(1) - the catalytic core - and F(0) - the membrane proton channel. F(1) has five subunits: alpha(3), beta(3), gamma(1), delta(1), epsilon(1). F(0) has four main subunits: a(1), b(1), b'(1) and c(10-14). The alpha and beta chains form an alternating ring which encloses part of the gamma chain. F(1) is attached to F(0) by a central stalk formed by the gamma and epsilon chains, while a peripheral stalk is formed by the delta, b and b' chains.

It is found in the plastid. The protein resides in the chloroplast thylakoid membrane. In terms of biological role, f(1)F(0) ATP synthase produces ATP from ADP in the presence of a proton or sodium gradient. F-type ATPases consist of two structural domains, F(1) containing the extramembraneous catalytic core and F(0) containing the membrane proton channel, linked together by a central stalk and a peripheral stalk. During catalysis, ATP synthesis in the catalytic domain of F(1) is coupled via a rotary mechanism of the central stalk subunits to proton translocation. Its function is as follows. Component of the F(0) channel, it forms part of the peripheral stalk, linking F(1) to F(0). The sequence is that of ATP synthase subunit b, chloroplastic from Trieres chinensis (Marine centric diatom).